The chain runs to 200 residues: Nascent polypeptide-associated complex subunit alpha (200 aa).

Residues 1–19 are compositionally biased toward basic and acidic residues; sequence MADPRVEELPEEEVKKTQV. Disordered stretches follow at residues 1 to 54 and 118 to 165; these read MADP…NEKK and AAQQ…EDKD. Residues 20–34 are compositionally biased toward acidic residues; that stretch reads EDLDNSSDDESDIEA. Positions 49–114 constitute an NAC-A/B domain; the sequence is SRNEKKARKA…AKIEDLNASA (66 aa). The span at 127–146 shows a compositional bias: basic and acidic residues; sequence AEHDHAGHTHEHEEAGKAKE. Over residues 147–160 the composition is skewed to acidic residues; that stretch reads EEEEDEGEEVDAEG. The UBA domain maps to 161–200; sequence IEDKDIELVMTQANVSRKKAIKALKENDNDIVNSIMALSI.

It belongs to the NAC-alpha family. In terms of assembly, part of the nascent polypeptide-associated complex (NAC), consisting of npc-1/egd2 and npc-2/egd1. NAC associates with ribosomes via npc-2/egd1.

The protein resides in the cytoplasm. It localises to the nucleus. In terms of biological role, component of the nascent polypeptide-associated complex (NAC), a dynamic component of the ribosomal exit tunnel, protecting the emerging polypeptides from interaction with other cytoplasmic proteins to ensure appropriate nascent protein targeting. The NAC complex also promotes mitochondrial protein import by enhancing productive ribosome interactions with the outer mitochondrial membrane and blocks the inappropriate interaction of ribosomes translating non-secretory nascent polypeptides with translocation sites in the membrane of the endoplasmic reticulum. Npc-1/egd2 may also be involved in transcription regulation. This chain is Nascent polypeptide-associated complex subunit alpha (npc-1), found in Neurospora crassa (strain ATCC 24698 / 74-OR23-1A / CBS 708.71 / DSM 1257 / FGSC 987).